The following is a 686-amino-acid chain: Delta-like protein 4 (686 aa).

The first 26 residues, 1–26 (MTPASRSACRWALLLLAVLWPQQRAA), serve as a signal peptide directing secretion. Topologically, residues 27–532 (GSGIFQLRLQ…GLPPSFPWVA (506 aa)) are extracellular. Intrachain disulfides connect Cys51–Cys55 and Cys62–Cys75. Residues Asn79, Asn109, and Asn162 are each glycosylated (N-linked (GlcNAc...) asparagine). The DSL domain maps to 174–218 (VICSDNYYGESCSRLCKKRDDHFGHYECQPDGSLSCLPGWTGKYC). A disulfide bridge links Cys176 with Cys185. 2 interaction with Notch1 regions span residues 186-188 (SRL) and 192-196 (RDDHF). Cystine bridges form between Cys189–Cys201, Cys209–Cys218, Cys223–Cys234, Cys227–Cys240, Cys242–Cys251, Cys254–Cys265, Cys260–Cys271, Cys273–Cys282, Cys289–Cys301, Cys295–Cys311, Cys313–Cys322, Cys329–Cys340, Cys334–Cys349, Cys351–Cys360, Cys367–Cys378, Cys372–Cys389, Cys391–Cys400, Cys407–Cys418, Cys412–Cys427, Cys429–Cys438, Cys445–Cys456, Cys450–Cys465, Cys467–Cys476, Cys485–Cys496, Cys490–Cys507, and Cys509–Cys518. 8 EGF-like domains span residues 219–252 (DQPI…RLCN), 253–283 (ECIP…LFCD), 285–323 (DLNY…EHCE), 325–361 (GLSK…QHCE), 364–401 (TLTC…SNCE), 403–439 (KVDR…THCE), 441–477 (HISD…RRCE), and 481–519 (THDA…SRCE). An N-linked (GlcNAc...) asparagine glycan is attached at Asn297. Asn394 carries N-linked (GlcNAc...) asparagine glycosylation. The chain crosses the membrane as a helical span at residues 533-553 (VSLGVGLVVLLVLLVMVVVAV). Over 554-686 (RQLRLRRPDD…RNECVIATEV (133 aa)) the chain is Cytoplasmic.

As to quaternary structure, interacts with NOTCH4. Interacts (via N-terminal DSL and MNNL domains) with NOTCH1 (via EGF-like domains). In terms of tissue distribution, expressed in vascular endothelium. Expressed in retina at least during embryogenesis.

Its subcellular location is the cell membrane. Its function is as follows. Involved in the Notch signaling pathway as Notch ligand. Activates NOTCH1 and NOTCH4. Involved in angiogenesis; negatively regulates endothelial cell proliferation and migration and angiogenic sprouting. Essential for retinal progenitor proliferation. Required for suppressing rod fates in late retinal progenitors as well as for proper generation of other retinal cell types. During spinal cord neurogenesis, inhibits V2a interneuron fate. The polypeptide is Delta-like protein 4 (Dll4) (Mus musculus (Mouse)).